Reading from the N-terminus, the 215-residue chain is Fibrillarin-like rRNA/tRNA 2'-O-methyltransferase (215 aa).

The segment at 1 to 29 (MKASSSLPDGVQRRQFDNRSRLTTHGTTV) is disordered. Residues 11–20 (VQRRQFDNRS) are compositionally biased toward basic and acidic residues. Residues 76 to 77 (TT), 92 to 93 (EF), 117 to 118 (DA), and 138 to 141 (DVAT) each bind S-adenosyl-L-methionine.

This sequence belongs to the methyltransferase superfamily. Fibrillarin family. Interacts with nop5. Component of box C/D small ribonucleoprotein (sRNP) particles that contain rpl7ae, FlpA and nop5, plus a guide RNA.

In terms of biological role, involved in pre-rRNA and tRNA processing. Utilizes the methyl donor S-adenosyl-L-methionine to catalyze the site-specific 2'-hydroxyl methylation of ribose moieties in rRNA and tRNA. Site specificity is provided by a guide RNA that base pairs with the substrate. Methylation occurs at a characteristic distance from the sequence involved in base pairing with the guide RNA. This chain is Fibrillarin-like rRNA/tRNA 2'-O-methyltransferase, found in Haloquadratum walsbyi (strain DSM 16790 / HBSQ001).